The sequence spans 505 residues: Maturase K (505 aa).

Belongs to the intron maturase 2 family. MatK subfamily.

Its subcellular location is the plastid. The protein resides in the chloroplast. Usually encoded in the trnK tRNA gene intron. Probably assists in splicing its own and other chloroplast group II introns. The protein is Maturase K of Spinacia oleracea (Spinach).